Reading from the N-terminus, the 63-residue chain is Large ribosomal subunit protein uL29 (63 aa).

Belongs to the universal ribosomal protein uL29 family.

The protein is Large ribosomal subunit protein uL29 of Salmonella agona (strain SL483).